The following is a 313-amino-acid chain: Putative stilbene synthase 2 (313 aa).

The active site involves C88. Residues L191 and 229 to 231 (GGP) each bind substrate.

The protein belongs to the thiolase-like superfamily. Chalcone/stilbene synthases family. As to quaternary structure, homodimer.

The protein resides in the cytoplasm. It catalyses the reaction 4-coumaroyl-CoA + 3 malonyl-CoA + 3 H(+) = trans-resveratrol + 4 CO2 + 4 CoA. It functions in the pathway phytoalexin biosynthesis; 3,4',5-trihydroxystilbene biosynthesis; 3,4',5-trihydroxystilbene from trans-4-coumarate: step 2/2. The protein is Putative stilbene synthase 2 of Arachis hypogaea (Peanut).